A 251-amino-acid polypeptide reads, in one-letter code: Indole-3-glycerol phosphate synthase (251 aa).

The segment covering 1–12 (MDDSSSLASPVQ) has biased composition (polar residues). A disordered region spans residues 1 to 27 (MDDSSSLASPVQSILAAARRRDPPTRR).

The protein belongs to the TrpC family.

The enzyme catalyses 1-(2-carboxyphenylamino)-1-deoxy-D-ribulose 5-phosphate + H(+) = (1S,2R)-1-C-(indol-3-yl)glycerol 3-phosphate + CO2 + H2O. It functions in the pathway amino-acid biosynthesis; L-tryptophan biosynthesis; L-tryptophan from chorismate: step 4/5. In Halobacterium salinarum (strain ATCC 700922 / JCM 11081 / NRC-1) (Halobacterium halobium), this protein is Indole-3-glycerol phosphate synthase.